The sequence spans 260 residues: Putative sgc region transcriptional regulator (260 aa).

The HTH deoR-type domain occupies 5–61; that stretch reads RPDRIKQMLHYLWQHRHLSTQQAMELFGYAEATVRRDFQYIVNQYPGMIRGHGCLDF. A DNA-binding region (H-T-H motif) is located at residues 22–41; the sequence is LSTQQAMELFGYAEATVRRD.

Putative transcriptional regulator for the sgcREAQCX region. The protein is Putative sgc region transcriptional regulator (sgcR) of Escherichia coli (strain K12).